The primary structure comprises 162 residues: Single-stranded DNA-binding protein 1 (162 aa).

The 106-residue stretch at 5 to 110 (LNKVMLIGHL…IVCTDMQMLG (106 aa)) folds into the SSB domain. Residues 110 to 162 (GAKDSGGGTSDASYSQNRPSYSRPSRPEPSSGNYGASPSSGGAQEFEKDDLPF) are disordered. Residues 122-140 (SYSQNRPSYSRPSRPEPSS) show a composition bias toward low complexity. A compositionally biased stretch (polar residues) spans 141 to 151 (GNYGASPSSGG).

Homotetramer.

The chain is Single-stranded DNA-binding protein 1 (ssb1) from Chlorobaculum tepidum (strain ATCC 49652 / DSM 12025 / NBRC 103806 / TLS) (Chlorobium tepidum).